The following is an 872-amino-acid chain: Facilitated trehalose transporter Tret1 (872 aa).

Disordered regions lie at residues 1–40 (MSGR…LKEK), 53–217 (VESN…KATS), 262–281 (SSSE…RKHQ), and 293–315 (KVLQ…KRLI). Over 1 to 406 (MSGRDNRGAG…VYRPTTNPIY (406 aa)) the chain is Cytoplasmic. A compositionally biased stretch (gly residues) spans 8 to 22 (GAGGGGGGGGGGSGG). 3 stretches are compositionally biased toward low complexity: residues 55-68 (SNLS…SLDT), 84-98 (RHPQ…QQQR), and 121-132 (PPTQQQPQQQHQ). A phosphoserine mark is found at serine 262, serine 263, and serine 264. Serine 334 and serine 336 each carry phosphoserine. The disordered stretch occupies residues 340–361 (FLTSRQHFQQQRSISTDSRKSR). The span at 344-355 (RQHFQQQRSIST) shows a compositional bias: polar residues. A helical membrane pass occupies residues 407-427 (IWTQVLAALSVSLGSLVVGFV). At 428-454 (SAYTSPALITMTNGNITSFEVTPQAAS) the chain is on the extracellular side. Asparagine 442 carries N-linked (GlcNAc...) asparagine glycosylation. A helical transmembrane segment spans residues 455–475 (WVGGIMPLAGLLGGIAGGPFI). Over 476–488 (EYLGRRNTILTTA) the chain is Cytoplasmic. A helical transmembrane segment spans residues 489 to 509 (VPFIVSSLLIACAVNITMVLL). The Extracellular segment spans residues 510-511 (GR). Residues 512–532 (FLAGFCVGIASLSLPVYLGET) traverse the membrane as a helical segment. Topologically, residues 533–538 (VQPEVR) are cytoplasmic. Residues 539–559 (GTLGLLPTAFGNIGILLCFVA) form a helical membrane-spanning segment. At 560 to 566 (GTYMDWS) the chain is on the extracellular side. The chain crosses the membrane as a helical span at residues 567-587 (MLAFLGAALPVPFLILMFLIP). At 588–650 (ETPRWYVSRG…ELLKRNNLKP (63 aa)) the chain is on the cytoplasmic side. Residues 651–671 (LSISLGLMFFQQLSGINAVIF) form a helical membrane-spanning segment. Topologically, residues 672-687 (YTVQIFKDAGSTIDGN) are extracellular. The helical transmembrane segment at 688–708 (VCTIIVGIVNFMATFIGIILI) threads the bilayer. Residues 709 to 714 (DRAGRK) lie on the Cytoplasmic side of the membrane. Residues 715–735 (ILLYVSNVAMIITLFVLGGFF) traverse the membrane as a helical segment. The Extracellular portion of the chain corresponds to 736-755 (YCKDKAGIDVSNVGWLPLSC). A helical membrane pass occupies residues 756-776 (FVVYILGFSLGFGPIPWLMMG). Residues 777–784 (EILPAKIR) are Cytoplasmic-facing. Residues 785–803 (GSAASVATAFNWTCTFVVT) traverse the membrane as a helical segment. Over 804–816 (KTFQDMLDVIGSY) the chain is Extracellular. The helical transmembrane segment at 817–837 (GAFWLFGAICFIGLFFVIIYV) threads the bilayer. Residues 838–872 (PETQGKTLEDIERKMMGRVRRMSSVANIKPLSFNM) lie on the Cytoplasmic side of the membrane. Phosphoserine is present on residues serine 860 and serine 861.

It belongs to the major facilitator superfamily. Sugar transporter (TC 2.A.1.1) family. Trehalose transporter subfamily.

Its subcellular location is the cell membrane. In terms of biological role, low-capacity facilitative transporter for trehalose. Does not transport maltose, sucrose or lactose. Mediates the bidirectional transfer of trehalose. Responsible for the transport of trehalose synthesized in the fat body and the incorporation of trehalose into other tissues that require a carbon source, thereby regulating trehalose levels in the hemolymph. The sequence is that of Facilitated trehalose transporter Tret1 from Drosophila willistoni (Fruit fly).